The sequence spans 1351 residues: Bromodomain-containing protein 4A (1351 aa).

Disordered regions lie at residues 1–23 (MSSETGLGTRLRATSGMGDGIEG), 35–58 (PQPQATVMNNPDPPEITRPNQPKR), 168–244 (ETEL…RPPA), 285–368 (AAQP…DTKT), 478–638 (EPEE…PMSY), 700–799 (CLRK…LDSS), and 821–1334 (PDLP…PSID). One can recognise a Bromo 1 domain in the interval 58-164 (RQTNQLQYLL…KLFLQKISEM (107 aa)). Residues 208–219 (VKPPVTPVSKPS) are compositionally biased toward low complexity. Over residues 220-235 (TPTPPTVTRAPTPPQT) the composition is skewed to pro residues. Residues 327-343 (PRKENGRQIRPTKKTEV) show a composition bias toward basic and acidic residues. Residues 349–359 (PAPPVLHPQPA) show a composition bias toward pro residues. A Bromo 2 domain is found at 366–475 (TKTSEQLRYC…DVFEMRFAKM (110 aa)). Residues 482-504 (APAPVPSLAPGPPAPSIKGPPPT) are compositionally biased toward pro residues. An NPS region region spans residues 504–522 (TSSDSSSDSTSDSESSSDS). Positions 505–517 (SSDSSSDSTSDSE) are enriched in low complexity. Residues 543–598 (QLAALSQPQPNKPKKKEREKRKEKHKRKEEVEEPRKGRIREPPAKKPKKSVQGSGG) form a BID region region. The span at 554 to 569 (KPKKKEREKRKEKHKR) shows a compositional bias: basic residues. Positions 570–586 (KEEVEEPRKGRIREPPA) are enriched in basic and acidic residues. Residues 607 to 621 (PPPAPRPARPAPPSA) show a composition bias toward pro residues. One can recognise an NET domain in the interval 624–708 (ESSEEETQRC…SCLRKKRKSQ (85 aa)). Residues 629–638 (ETQRCRPMSY) are compositionally biased toward basic and acidic residues. Low complexity predominate over residues 725–738 (SSSESESSSESSTS). Positions 751–767 (QKKKGHSGRESRKHHHP) are enriched in basic residues. A compositionally biased stretch (low complexity) spans 788–799 (PSYPLPSSLDSS). The span at 872–890 (PAMPPSASPPPPAPQPPQQ) shows a compositional bias: pro residues. The segment covering 892-902 (HVHHHHHHHAQ) has biased composition (basic residues). Positions 927-953 (LQKSQQPPTQSPIHSLLTSVKVQSQTP) are enriched in polar residues. A compositionally biased stretch (pro residues) spans 968–983 (VYPPPPSTATTAPPPA). Low complexity-rich tracts occupy residues 994–1003 (PVVPQQLPAG) and 1011–1028 (QQQQHPALQGTLVSSHQQ). The tract at residues 1051–1350 (RQQKQETYPG…LMEIFEQNLF (300 aa)) is C-terminal (CTD) region. Residues 1075 to 1089 (PPVPPYPGLTHPPSP) are compositionally biased toward pro residues. Composition is skewed to basic and acidic residues over residues 1150 to 1161 (PRPDLKKMDGGR) and 1176 to 1197 (PEKEKQKQEPKTPVAPKKDIKI). Positions 1214–1224 (PTSAGKSTSDS) are enriched in polar residues. A compositionally biased stretch (basic and acidic residues) spans 1226-1284 (ELFRRQAREKEERERALKLQAEQAERVRREQDRMSRTREDDEVQDQARKAHEEARRRQE). The segment covering 1301 to 1310 (SPAQSSQPMM) has biased composition (low complexity). Positions 1311–1323 (DQREMARKREQER) are enriched in basic and acidic residues.

The protein belongs to the BET family.

The protein resides in the nucleus. Its subcellular location is the chromosome. Chromatin reader protein that recognizes and binds acetylated histones and plays a key role in transmission of epigenetic memory across cell divisions and transcription regulation. Remains associated with acetylated chromatin throughout the entire cell cycle and provides epigenetic memory for postmitotic G1 gene transcription by preserving acetylated chromatin status and maintaining high-order chromatin structure. During interphase, plays a key role in regulating the transcription of signal-inducible genes by associating with the P-TEFb complex and recruiting it to promoters. This chain is Bromodomain-containing protein 4A (brd4-a), found in Xenopus laevis (African clawed frog).